Reading from the N-terminus, the 476-residue chain is Salicylate biosynthesis isochorismate synthase (476 aa).

The segment at 181–202 is disordered; it reads RRRPSGPTAGAQGDASAQERRQ.

It belongs to the isochorismate synthase family.

The enzyme catalyses chorismate = isochorismate. It participates in siderophore biosynthesis; salicylate biosynthesis. Its function is as follows. Involved in the conversion of chorismate to salicylate. This chain is Salicylate biosynthesis isochorismate synthase (pchA), found in Pseudomonas aeruginosa (strain ATCC 15692 / DSM 22644 / CIP 104116 / JCM 14847 / LMG 12228 / 1C / PRS 101 / PAO1).